A 568-amino-acid chain; its full sequence is TNF receptor-associated factor 3 (568 aa).

The interval 1 to 28 (MESSKKMDSPGALQTNPPLKLHTDRSAG) is disordered. Position 9 is a phosphoserine (serine 9). A Glycyl cysteine thioester (Cys-Gly) (interchain with G-Cter in ubiquitin) cross-link involves residue cysteine 56. Residues 68-77 (CGHRFCESCM) form an RING-type zinc finger. A Glycyl cysteine thioester (Cys-Gly) (interchain with G-Cter in ubiquitin) cross-link involves residue cysteine 124. 2 TRAF-type zinc fingers span residues 135-190 (VHLK…IALQ) and 191-249 (KHED…QQIK). Lysine 168 participates in a covalent cross-link: Glycyl lysine isopeptide (Lys-Gly) (interchain with G-Cter in ubiquitin). Positions 267 to 338 (SNSLEKKVSL…KLKELDKEIR (72 aa)) form a coiled coil. Residue lysine 329 forms a Glycyl lysine isopeptide (Lys-Gly) (interchain with G-Cter in ubiquitin) linkage. The (Microbial infection) Interaction with glycoprotein N of Andes and New York hantaviruses stretch occupies residues 392-415 (LSVHDIRLADMDLRFQVLETASYN). One can recognise an MATH domain in the interval 415-560 (NGVLIWKIRD…DDTIFIKVIV (146 aa)).

The protein belongs to the TNF receptor-associated factor family. A subfamily. In terms of assembly, homotrimer. Heterotrimer with TRAF2 and TRAF5. Interacts with LTBR/TNFRSF3, TNFRSF4, TNFRSF5/CD40, TNFRSF8/CD30, TNFRSF13C TNFRSF17/BCMA, TLR4 and EDAR. Interacts with MAP3K5, MAP3K14, TRAIP/TRIP, TDP2/TTRAP, TANK/ITRAF and TRAF3IP1. Interaction with TNFRSF5/CD40 is modulated by TANK/ITRAF, which competes for the same binding site. Interacts with TICAM1. Interacts with TRAFD1. Interacts with OTUB1, OTUB2 and OTUD5. Interacts with RNF216, OPTN and TBK1. Identified in a complex with TRAF2, MAP3K14 and BIRC3. Interacts with BIRC2 and BIRC3. Upon exposure to bacterial lipopolysaccharide (LPS), recruited to a transient complex containing TLR4, TRAF3, TRAF6, IKBKG, MAP3K7, MYD88, TICAM1, BIRC2, BIRC3 and UBE2N. Interacts (via RING-type zinc finger domain) with SRC. Interacts with CARD14. Interacts (via MATH domain) with PTPN22; the interaction promotes TRAF3 polyubiquitination. Interacts with MAVS. Directly interacts with DDX3X; this interaction stimulates TRAF3 'Lys-63' ubiquitination. Interacts with IRF3. Interacts with IKBKE in the course of Sendai virus infection. Interacts with TRIM35. Interacts with GAPDH; promoting TRAF3 ubiquitination. Interacts with PPP3CA and PPP3CB. Interacts with ATP1B1; promoting TRAF3 ubiquitination. Interacts with RALGDS. Interacts with FBXO11. (Microbial infection) Interacts (via N-terminus) with New York hantavirus glycoprotein N (via C-terminus); this interaction inhibits the formation of TRAF3-TBK1 complexes. As to quaternary structure, (Microbial infection) Interacts with Andes hantavirus glycoprotein N (via C-terminus); this interaction inhibits the formation of TRAF3-TBK1 complexes. In terms of assembly, (Microbial infection) Interacts with Tula hantavirus glycoprotein N (via C-terminus); this interaction inhibits the formation of TRAF3-TBK1 complexes. (Microbial infection) Interacts with Epstein-Barr virus protein LMP1. Undergoes 'Lys-48'-linked polyubiquitination, leading to its proteasomal degradation in response to signaling by TNFSF13B, TLR4 or through CD40. 'Lys-48'-linked polyubiquitinated form is deubiquitinated by OTUD7B, preventing TRAF3 proteolysis and over-activation of non-canonical NF-kappa-B. Undergoes 'Lys-63'-linked ubiquitination during early stages of virus infection, and 'Lys-48'-linked ubiquitination during later stages. Undergoes both 'Lys-48'-linked and 'Lys-63'-linked ubiquitination in response to TLR3 and TLR4 signaling. 'Lys-63'-linked ubiquitination can be mediated by TRIM35. Deubiquitinated by OTUB1, OTUB2 and OTUD5. Undergoes 'Lys-63'-linked deubiquitination by MYSM1 to terminate the pattern-recognition receptors/PRRs pathways. Also undergoes 'Lys-29'-linked ubiquitination on Cys-56 and Cys-124 by NEDD4L; leading to increased 'Lys-48'- and 'Lys-63'-linked ubiquitination as well as increased binding to TBK1. TLR4 signals emanating from bacteria containing vesicles trigger 'Lys-33'-linked polyubiquitination that promotes the assembly of the exocyst complex thereby connecting innate immune signaling to the cellular trafficking apparatus. Deubiquitinated by USP25 during viral infection, leading to TRAF3 stabilization and type I interferon production. Ubiquitinated at Lys-329 by the SCF(FBXL2) complex, leading to its degradation by the proteasome. 'Lys-63'-linked ubiquitination by FBXO11 in a NEDD8-dependent manner promotes the amplification of IFN-I signaling. Post-translationally, (Microbial infection) Cleaved by enterovirus D68 protease 2A; leading to inhibition of NF-kappa-B or IFN-beta triggered by TRAF3.

The protein resides in the cytoplasm. It is found in the endosome. The protein localises to the mitochondrion. The catalysed reaction is S-ubiquitinyl-[E2 ubiquitin-conjugating enzyme]-L-cysteine + [acceptor protein]-L-lysine = [E2 ubiquitin-conjugating enzyme]-L-cysteine + N(6)-ubiquitinyl-[acceptor protein]-L-lysine.. In terms of biological role, cytoplasmic E3 ubiquitin ligase that regulates various signaling pathways, such as the NF-kappa-B, mitogen-activated protein kinase (MAPK) and interferon regulatory factor (IRF) pathways, and thus controls a lot of biological processes in both immune and non-immune cell types. In TLR and RLR signaling pathways, acts as an E3 ubiquitin ligase promoting the synthesis of 'Lys-63'-linked polyubiquitin chains on several substrates such as ASC that lead to the activation of the type I interferon response or the inflammasome. Following the activation of certain TLRs such as TLR4, acts as a negative NF-kappa-B regulator, possibly to avoid unregulated inflammatory response, and its degradation via 'Lys-48'-linked polyubiquitination is required for MAPK activation and production of inflammatory cytokines. Alternatively, when TLR4 orchestrates bacterial expulsion, TRAF3 undergoes 'Lys-33'-linked polyubiquitination and subsequently binds to RALGDS, mobilizing the exocyst complex to rapidly expel intracellular bacteria back for clearance. Also acts as a constitutive negative regulator of the alternative NF-kappa-B pathway, which controls B-cell survival and lymphoid organ development. Required for normal antibody isotype switching from IgM to IgG. Plays a role T-cell dependent immune responses. Down-regulates proteolytic processing of NFKB2, and thereby inhibits non-canonical activation of NF-kappa-B. Promotes ubiquitination and proteasomal degradation of MAP3K14. The chain is TNF receptor-associated factor 3 from Homo sapiens (Human).